Here is a 297-residue protein sequence, read N- to C-terminus: MRSKPDWLKVKMPTGDTFYQVRNLMKLYKLNTVCEEAACPNIGECWNKRHATVMILGSTCTRACAFCNVVSGIPDKLDPHEPQNLAKAVGLLKLEHVVITSVDRDDLEDGGSGHFVECIEEIRKNDQNVTIEVLTPDFLNKHGAIEKVADAAPDVYNHNIETVPRLYAKIRPKARYFHSLYLLKTVKYKNPKVFTKSGIMVGLGETKEEIYQVMNDLRSADVDFITIGQYLQPTPKHAAVDRYVTPEEFDHYKYVAYSKGFLMVASGPLVRSSYHAGEDFQRLKKNRAAMFMHAKSN.

[4Fe-4S] cluster contacts are provided by Cys-34, Cys-39, Cys-45, Cys-60, Cys-64, Cys-67, and Ser-273. Positions 46–262 constitute a Radical SAM core domain; it reads WNKRHATVMI…KYVAYSKGFL (217 aa).

The protein belongs to the radical SAM superfamily. Lipoyl synthase family. It depends on [4Fe-4S] cluster as a cofactor.

The protein resides in the cytoplasm. It catalyses the reaction [[Fe-S] cluster scaffold protein carrying a second [4Fe-4S](2+) cluster] + N(6)-octanoyl-L-lysyl-[protein] + 2 oxidized [2Fe-2S]-[ferredoxin] + 2 S-adenosyl-L-methionine + 4 H(+) = [[Fe-S] cluster scaffold protein] + N(6)-[(R)-dihydrolipoyl]-L-lysyl-[protein] + 4 Fe(3+) + 2 hydrogen sulfide + 2 5'-deoxyadenosine + 2 L-methionine + 2 reduced [2Fe-2S]-[ferredoxin]. Its pathway is protein modification; protein lipoylation via endogenous pathway; protein N(6)-(lipoyl)lysine from octanoyl-[acyl-carrier-protein]: step 2/2. Functionally, catalyzes the radical-mediated insertion of two sulfur atoms into the C-6 and C-8 positions of the octanoyl moiety bound to the lipoyl domains of lipoate-dependent enzymes, thereby converting the octanoylated domains into lipoylated derivatives. This is Lipoyl synthase from Ehrlichia chaffeensis (strain ATCC CRL-10679 / Arkansas).